The sequence spans 462 residues: Putative zinc metalloprotease RSc1411 (462 aa).

A helical membrane pass occupies residues 1–21 (MLTVLAFVFAIAVLIVVHELG). Histidine 18 contributes to the Zn(2+) binding site. Residue glutamate 19 is part of the active site. Histidine 22 is a Zn(2+) binding site. A helical membrane pass occupies residues 102–124 (FAIVAAGPVFNFLLAIALYALLA). In terms of domain architecture, PDZ spans 201 to 283 (TVRLRELPSA…MPEQNASIDI (83 aa)). 2 helical membrane-spanning segments follow: residues 386 to 406 (FVAF…LPVP) and 430 to 450 (WQAV…SLAL).

The protein belongs to the peptidase M50B family. Zn(2+) is required as a cofactor.

It is found in the cell inner membrane. In Ralstonia nicotianae (strain ATCC BAA-1114 / GMI1000) (Ralstonia solanacearum), this protein is Putative zinc metalloprotease RSc1411.